We begin with the raw amino-acid sequence, 256 residues long: 5-oxoprolinase subunit A 2 (256 aa).

This sequence belongs to the LamB/PxpA family. As to quaternary structure, forms a complex composed of PxpA, PxpB and PxpC.

It catalyses the reaction 5-oxo-L-proline + ATP + 2 H2O = L-glutamate + ADP + phosphate + H(+). In terms of biological role, catalyzes the cleavage of 5-oxoproline to form L-glutamate coupled to the hydrolysis of ATP to ADP and inorganic phosphate. This Bradyrhizobium diazoefficiens (strain JCM 10833 / BCRC 13528 / IAM 13628 / NBRC 14792 / USDA 110) protein is 5-oxoprolinase subunit A 2.